Consider the following 346-residue polypeptide: MVSSNFYKNLGPRKLTAIIDFLHDIIEPPKIHEDIAIHDIKILQEASPNDISFLSNPKYSEFLKTTKAAACIVPKNFTGEANPNTVLIHAENSYFAYGKLIDFFYTPIKSYPAKIMKSAIVADSATIGKNCYIGHNVVIEDDVIIGDNSIIEAGSFIGRGVTIGRNARIEQHVSINYTIIGDEVVILAGAKIGQDGFGFSTEKGVHHKIFHIGIVKIGNNVEIGSNITIDRGSLQDTIIEDLCRIDNLVQIGHGVKIGKGSIIVAQAGIAGSSTIGKYCALGGQVGIAGHLNIGDGTQVAAQGGVAQNIEAGKIVGGSPAVPIMDWHRQSIIMKQLVKTSNSKLKK.

Catalysis depends on H253, which acts as the Proton acceptor.

It belongs to the transferase hexapeptide repeat family. LpxD subfamily. As to quaternary structure, homotrimer.

It carries out the reaction a UDP-3-O-[(3R)-3-hydroxyacyl]-alpha-D-glucosamine + a (3R)-hydroxyacyl-[ACP] = a UDP-2-N,3-O-bis[(3R)-3-hydroxyacyl]-alpha-D-glucosamine + holo-[ACP] + H(+). Its pathway is bacterial outer membrane biogenesis; LPS lipid A biosynthesis. Its function is as follows. Catalyzes the N-acylation of UDP-3-O-acylglucosamine using 3-hydroxyacyl-ACP as the acyl donor. Is involved in the biosynthesis of lipid A, a phosphorylated glycolipid that anchors the lipopolysaccharide to the outer membrane of the cell. The sequence is that of UDP-3-O-acylglucosamine N-acyltransferase from Rickettsia felis (strain ATCC VR-1525 / URRWXCal2) (Rickettsia azadi).